The chain runs to 262 residues: Shikimate dehydrogenase (NADP(+)) (262 aa).

Residues 13–15 and Thr-59 each bind shikimate; that span reads SLS. Lys-63 functions as the Proton acceptor in the catalytic mechanism. Asp-75 is a binding site for NADP(+). 2 residues coordinate shikimate: Asn-84 and Asp-99. NADP(+) is bound by residues 122–126, 144–149, and Met-205; these read GAGGA and NRTLEK. Residue Tyr-207 coordinates shikimate. Residue Gly-228 participates in NADP(+) binding.

Belongs to the shikimate dehydrogenase family. Homodimer.

It carries out the reaction shikimate + NADP(+) = 3-dehydroshikimate + NADPH + H(+). Its pathway is metabolic intermediate biosynthesis; chorismate biosynthesis; chorismate from D-erythrose 4-phosphate and phosphoenolpyruvate: step 4/7. Involved in the biosynthesis of the chorismate, which leads to the biosynthesis of aromatic amino acids. Catalyzes the reversible NADPH linked reduction of 3-dehydroshikimate (DHSA) to yield shikimate (SA). In Ignicoccus hospitalis (strain KIN4/I / DSM 18386 / JCM 14125), this protein is Shikimate dehydrogenase (NADP(+)).